The chain runs to 216 residues: Large ribosomal subunit protein uL1B (216 aa).

S11 is modified (phosphoserine).

Belongs to the universal ribosomal protein uL1 family. In terms of assembly, component of the large ribosomal subunit (LSU). Mature yeast ribosomes consist of a small (40S) and a large (60S) subunit. The 40S small subunit contains 1 molecule of ribosomal RNA (18S rRNA) and at least 33 different proteins. The large 60S subunit contains 3 rRNA molecules (25S, 5.8S and 5S rRNA) and at least 46 different proteins. uL1 forms part of the L1 stalk.

The protein resides in the cytoplasm. Its function is as follows. Component of the ribosome, a large ribonucleoprotein complex responsible for the synthesis of proteins in the cell. The small ribosomal subunit (SSU) binds messenger RNAs (mRNAs) and translates the encoded message by selecting cognate aminoacyl-transfer RNA (tRNA) molecules. The large subunit (LSU) contains the ribosomal catalytic site termed the peptidyl transferase center (PTC), which catalyzes the formation of peptide bonds, thereby polymerizing the amino acids delivered by tRNAs into a polypeptide chain. The nascent polypeptides leave the ribosome through a tunnel in the LSU and interact with protein factors that function in enzymatic processing, targeting, and the membrane insertion of nascent chains at the exit of the ribosomal tunnel. uL1 forms part of the L1 stalk, a mobile element that plays a role in evacuating the exit-site tRNA. The chain is Large ribosomal subunit protein uL1B (rpl101) from Schizosaccharomyces pombe (strain 972 / ATCC 24843) (Fission yeast).